Consider the following 411-residue polypeptide: ATP-dependent Clp protease ATP-binding subunit ClpX (411 aa).

Positions 1–49 (MSDKNIRCSFCGRTQKEVKKLIAGPGVYICDECVKLAYDIIEEEDSEEI) constitute a ClpX-type ZB domain. Zn(2+)-binding residues include C8, C11, C30, and C33. 115 to 122 (PTGVGKTL) serves as a coordination point for ATP.

Belongs to the ClpX chaperone family. Component of the ClpX-ClpP complex. Forms a hexameric ring that, in the presence of ATP, binds to fourteen ClpP subunits assembled into a disk-like structure with a central cavity, resembling the structure of eukaryotic proteasomes.

Its function is as follows. ATP-dependent specificity component of the Clp protease. It directs the protease to specific substrates. Can perform chaperone functions in the absence of ClpP. This chain is ATP-dependent Clp protease ATP-binding subunit ClpX, found in Dictyoglomus turgidum (strain DSM 6724 / Z-1310).